The sequence spans 901 residues: Phosphatidylinositol 3-kinase catalytic subunit type 3 (901 aa).

Residues 21 to 189 (LQTNVQVKVA…DLLFKQVTRQ (169 aa)) form the C2 PI3K-type domain. The 226-residue stretch at 302–527 (RHRQVKPNKQ…SKMYQNIQDR (226 aa)) folds into the PIK helical domain. Residues 607-886 (IPDTASFFKS…QIESSLNAKM (280 aa)) enclose the PI3K/PI4K catalytic domain. The interval 613–619 (FFKSEMM) is G-loop. The interval 755–763 (GLGDRHLDN) is catalytic loop. Residues 774-795 (HVDFGFILGRDPKPMPPPMKLT) are activation loop.

Belongs to the PI3/PI4-kinase family. In terms of assembly, interacts with bec-1. May interact with dyn-1. It depends on Mn(2+) as a cofactor. Ubiquitous.

Its subcellular location is the nucleus outer membrane. The protein localises to the cytoplasm. The protein resides in the cytoplasmic granule. It localises to the cell projection. It is found in the phagocytic cup. The enzyme catalyses a 1,2-diacyl-sn-glycero-3-phospho-(1D-myo-inositol) + ATP = a 1,2-diacyl-sn-glycero-3-phospho-(1D-myo-inositol-3-phosphate) + ADP + H(+). With respect to regulation, inhibited by wortmannin. Its function is as follows. Catalytic subunit of the PI3K complex that mediates formation of phosphatidylinositol 3-phosphate. Together with bec-1, mediates the production of phosphatidylinositol 3-phosphate on intracellular vesicles and thereby regulates membrane trafficking. Plays a role in endosome-to-Golgi retrograde transport of mig-14. Involved in clearance of apoptotic cell corpses by phagosomes. Phagosome maturation requires two sequential and non-overlapping pulses of phosphatidylinositol-3-phosphate (PI3P) on the vesicle surface which mediates recruitment of sortins snx-1 and lst-4 and small GTPases rab-5, rab-2 and rab-7, downstream of dynamin dyn-1. The first pulse is initiated by piki-1, then maintained by vps-34 which also produces the second pulse. Required for embryonic development. Together with bec-1, involved in L3/L4 larval molting stage probably by regulating cuticle shedding. Regulates the expansion of the nucleus outer membrane. Involved in the secretion and localization of lrp-1 at the apical surface of hyp7 syncytium. May regulate endocytosis in hypodermal cells. May play a role in the formation of gut granules (a lysosome-related organelle). Plays a role in germ stem cell proliferation during larval development. The protein is Phosphatidylinositol 3-kinase catalytic subunit type 3 of Caenorhabditis elegans.